The primary structure comprises 268 residues: CCAAT/enhancer-binding protein delta (268 aa).

3 disordered regions span residues 1–50, 98–132, and 152–223; these read MSAA…STTP, LELL…DAPG, and AAQP…QQKL. The residue at position 2 (serine 2) is an N-acetylserine. Lysine 120 is covalently cross-linked (Glycyl lysine isopeptide (Lys-Gly) (interchain with G-Cter in SUMO)). Residues 155 to 173 are compositionally biased toward pro residues; the sequence is PTPPTSPEPPRGSPGPSLA. A compositionally biased stretch (basic and acidic residues) spans 177–201; sequence VREKGAGKRGPDRGSPEYRQRRERN. Residues 191-254 form the bZIP domain; it reads SPEYRQRRER…ASLRQFFKEL (64 aa). A basic motif region spans residues 195-222; the sequence is RQRRERNNIAVRKSRDKAKRRNQEMQQK. A leucine-zipper region spans residues 226–254; that stretch reads LSAENEKLHQRVEQLTRDLASLRQFFKEL.

The protein belongs to the bZIP family. C/EBP subfamily. In terms of assembly, binds DNA as a homodimer and as a heterodimer. Can form stable heterodimers with CEBPA, CEBPB and CEBPE. Directly interacts with SPI1/PU.1; this interaction does not affect DNA-binding properties of each partner. Interacts with PRDM16. Ubiquitously expressed.

The protein localises to the nucleus. Functionally, transcription activator that recognizes two different DNA motifs: the CCAAT homology common to many promoters and the enhanced core homology common to many enhancers. Important transcription factor regulating the expression of genes involved in immune and inflammatory responses. Transcriptional activator that enhances IL6 transcription alone and as heterodimer with CEBPB. This Rattus norvegicus (Rat) protein is CCAAT/enhancer-binding protein delta (Cebpd).